The chain runs to 316 residues: NADH-cytochrome b5 reductase-like (316 aa).

The Oxidoreductase-like domain maps to 17–53; that stretch reads KPVEPLPSQCCGSGCSPCVFDLYYRDLERWETARARN. The FAD-binding FR-type domain occupies 76–178; that stretch reads ETFLAFHIST…RGPFGSFLYE (103 aa). FAD-binding positions include 158–173 and 183–215; these read ESWR…GPFG and GELL…TFVT.

It belongs to the flavoprotein pyridine nucleotide cytochrome reductase family. It depends on FAD as a cofactor.

It carries out the reaction 2 Fe(III)-[cytochrome b5] + NADH = 2 Fe(II)-[cytochrome b5] + NAD(+) + H(+). Functionally, NADH-cytochrome b5 reductases are involved in desaturation and elongation of fatty acids, cholesterol biosynthesis, drug metabolism, and, in erythrocyte, methemoglobin reduction. This Mus musculus (Mouse) protein is NADH-cytochrome b5 reductase-like (Cyb5rl).